Reading from the N-terminus, the 413-residue chain is Elongation factor 1-alpha (413 aa).

GTP contacts are provided by residues 1-7, 77-81, and 139-142; these read HVDSGKS, DAPGH, and NKMD. The tr-type G domain maps to 1 to 228; it reads HVDSGKSTTT…DAILPPARPT (228 aa). 2 positions are modified to 5-glutamyl glycerylphosphorylethanolamine: Glu287 and Glu360.

This sequence belongs to the TRAFAC class translation factor GTPase superfamily. Classic translation factor GTPase family. EF-Tu/EF-1A subfamily.

Its subcellular location is the cytoplasm. In terms of biological role, this protein promotes the GTP-dependent binding of aminoacyl-tRNA to the A-site of ribosomes during protein biosynthesis. This is Elongation factor 1-alpha from Heliocheilus albipunctella (Millet head miner).